A 184-amino-acid chain; its full sequence is uncharacterized protein (184 aa).

The tract at residues 130-149 is disordered; sequence DKDDDKKKKKKDDKKDDPCN.

Its subcellular location is the virion. This is an uncharacterized protein from Acanthamoeba polyphaga (Amoeba).